We begin with the raw amino-acid sequence, 119 residues long: Ribonuclease P protein component (119 aa).

This sequence belongs to the RnpA family. In terms of assembly, consists of a catalytic RNA component (M1 or rnpB) and a protein subunit.

The enzyme catalyses Endonucleolytic cleavage of RNA, removing 5'-extranucleotides from tRNA precursor.. RNaseP catalyzes the removal of the 5'-leader sequence from pre-tRNA to produce the mature 5'-terminus. It can also cleave other RNA substrates such as 4.5S RNA. The protein component plays an auxiliary but essential role in vivo by binding to the 5'-leader sequence and broadening the substrate specificity of the ribozyme. The chain is Ribonuclease P protein component from Cronobacter sakazakii (strain ATCC BAA-894) (Enterobacter sakazakii).